Here is a 223-residue protein sequence, read N- to C-terminus: Ras-related protein Rab-21 (223 aa).

A2 bears the N-acetylalanine mark. Positions 26, 29, 30, 31, 32, 43, 44, 46, 48, and 49 each coordinate GTP. T31 provides a ligand contact to Mg(2+). The Switch 1 motif lies at 41–54; the sequence is KFNDKHITTLQASF. Mg(2+) is bound by residues T49 and D72. The short motif at 74 to 92 is the Switch 2 element; the sequence is AGQERFHALGPIYYRDSNG. G75, N130, K131, D133, A161, and K162 together coordinate GTP. S-geranylgeranyl cysteine attachment occurs at residues C219 and C220. Cysteine methyl ester is present on C220. The propeptide at 221–223 is removed in mature form; that stretch reads SSG.

This sequence belongs to the small GTPase superfamily. Rab family. In terms of assembly, interacts with the cytoplasmic tail of integrins ITGA1, ITGA2, ITGA5, ITGA6, ITGA11 and ITGB1; this interaction is dependent upon its GDP/GTP cycle. Interacts with RABGEF1 (via VPS9 domain). Interacts with ANKRD27. Interacts (in GTP-bound form) with VAMP8 in response to starvation; the interaction probably regulates VAMP8 endolysosomal trafficking. Interacts (active GTP-bound form) with TMED10; the interaction is indirect and regulates TMED10 abundance and localization at the Golgi. Mg(2+) is required as a cofactor.

The protein resides in the endoplasmic reticulum membrane. It localises to the golgi apparatus. Its subcellular location is the trans-Golgi network. The protein localises to the golgi apparatus membrane. It is found in the early endosome membrane. The protein resides in the cytoplasmic vesicle membrane. It localises to the cleavage furrow. Its subcellular location is the cell projection. The protein localises to the neuron projection. The catalysed reaction is GTP + H2O = GDP + phosphate + H(+). Its activity is regulated as follows. Regulated by guanine nucleotide exchange factors (GEFs) including ANKRD27 and RABGEF1, which promote the exchange of bound GDP for free GTP. Regulated by GTPase activating proteins (GAPs) which increase the GTP hydrolysis activity. Inhibited by GDP dissociation inhibitors (GDIs). Its function is as follows. The small GTPases Rab are key regulators of intracellular membrane trafficking, from the formation of transport vesicles to their fusion with membranes. Rabs cycle between an inactive GDP-bound form and an active GTP-bound form that is able to recruit to membranes different sets of downstream effectors directly responsible for vesicle formation, movement, tethering and fusion. RAB21 is involved in membrane trafficking control. Regulates integrin internalization and recycling, but does not influence the traffic of endosomally translocated receptors in general. As a result, may regulate cell adhesion and migration. During the mitosis of adherent cells, controls the endosomal trafficking of integrins which is required for the successful completion of cytokinesis. Involved in neurite growth. Following SBF2/MTMT13-mediated activation in response to starvation-induced autophagy, binds to and regulates SNARE protein VAMP8 endolysosomal transport required for SNARE-mediated autophagosome-lysosome fusion. Modulates protein levels of the cargo receptors TMED2 and TMED10, and required for appropriate Golgi localization of TMED10. The polypeptide is Ras-related protein Rab-21 (Rattus norvegicus (Rat)).